The sequence spans 868 residues: DNA mismatch repair protein MutS (868 aa).

Position 620–627 (glycine 620–serine 627) interacts with ATP.

Belongs to the DNA mismatch repair MutS family.

Functionally, this protein is involved in the repair of mismatches in DNA. It is possible that it carries out the mismatch recognition step. This protein has a weak ATPase activity. This Xylella fastidiosa (strain 9a5c) protein is DNA mismatch repair protein MutS.